The chain runs to 203 residues: Snake venom metalloproteinase adamalysin-2 (203 aa).

The Peptidase M12B domain occupies 7-203 (RYIELVVVAD…YKPQCILNKP (197 aa)). 2 residues coordinate Ca(2+): E10 and D94. 2 disulfide bridges follow: C118/C198 and C158/C165. H143 is a binding site for Zn(2+). E144 is a catalytic residue. Residues H147 and H153 each coordinate Zn(2+). The Ca(2+) site is built by C198 and N201.

The protein belongs to the venom metalloproteinase (M12B) family. P-I subfamily. In terms of assembly, monomer. Requires Zn(2+) as cofactor. Expressed by the venom gland.

It localises to the secreted. It catalyses the reaction Cleavage of 1-Phe-|-Val-2, 5-His-|-Leu-6, 14-Ala-|-Leu-15, 15-Leu-|-Tyr-16, and 16-Tyr-|-Leu-17 of insulin B chain.. Functionally, has no significant hemorrhagic activity, but inactivates serpins by limited proteolysis of their reactive-site loops. In Crotalus adamanteus (Eastern diamondback rattlesnake), this protein is Snake venom metalloproteinase adamalysin-2.